The sequence spans 420 residues: MAKPPAVAAAAAAAASEELSQVPDEELLRWSKEELARRLRRAEGEKVGLMLEHGGLMRDVNRRLQQHLLEIRGLKDVNQRLQDDNQELRELCCFLDDDRQKGRKLAREWQRFGRHAAGAVWHEVARSQQKLRELEARQEALLRENLELKELVLLLDEERAALAAAGGAGGGGGGAGSRSSIDSQASLSGPLAGSAAGSGARDVGDGSSTSSAGSGGSPDHHHHVPAALLPPGPHKVPDGKAGATRRSLDDLSAPPHHRSIPNGLHDPSSTYIRPLETKVKLLDGDKLPPQQAGSGEFRTLRKGFSPYHSESQLASLPPSYQEVLQNGPACPVPELPSPPSTVYSSAGQKPEAVVHAMKVLEVHENLDRQLQDSCEEDLSEKEKAIVREMCNVVWRKLGDAASTKPSIRQHLSGNQFKGPL.

Ala2 carries the post-translational modification N-acetylalanine. Coiled coils occupy residues Glu26 to Cys92 and His122 to Ala165. The segment at Ala165–Tyr271 is disordered. Over residues Gly166–Gly176 the composition is skewed to gly residues. Ser179 bears the Phosphoserine mark. The span at Ala185 to Ala212 shows a compositional bias: low complexity. Position 247 is a phosphoserine (Ser247).

Belongs to the CCDC85 family. May interact with ARVCF, CTNND1, CTNND2 and PKP4. As to expression, predominantly expressed on the surface of the lateral ventricular walls of the developing cerebral cortex.

Its subcellular location is the cell junction. The protein resides in the tight junction. It localises to the adherens junction. May play a role in cell-cell adhesion and epithelium development through its interaction with proteins of the beta-catenin family. May play an important role in cortical development, especially in the maintenance of radial glia. The polypeptide is Coiled-coil domain-containing protein 85C (Ccdc85c) (Mus musculus (Mouse)).